A 265-amino-acid chain; its full sequence is Mlc titration factor A (265 aa).

H111, H148, H152, and E211 together coordinate Zn(2+).

It belongs to the MtfA family. Interacts with Mlc. The cofactor is Zn(2+).

It is found in the cytoplasm. Its function is as follows. Involved in the modulation of the activity of the glucose-phosphotransferase system (glucose-PTS). Interacts with the transcriptional repressor Mlc, preventing its interaction with DNA and leading to the modulation of expression of genes regulated by Mlc, including ptsG, which encodes the PTS system glucose-specific EIICB component. Shows zinc-dependent metallopeptidase activity. The polypeptide is Mlc titration factor A (Escherichia fergusonii).